The sequence spans 629 residues: Pumilio homolog 3 (629 aa).

2 stretches are compositionally biased toward basic residues: residues 1–10 (MEGKPRKKSF) and 18–37 (PSFK…RPFK). The segment at 1–92 (MEGKPRKKSF…EGDERKKPKW (92 aa)) is disordered. Over residues 62-92 (KPTDGKFAKKRKFPGDRIKQEEGDERKKPKW) the composition is skewed to basic and acidic residues. The short motif at 88 to 100 (KKPKWDEFKQKKK) is the Nuclear localization signal element. In terms of domain architecture, PUM-HD spans 120 to 473 (RAKQVWEMVR…ELLEAASPSL (354 aa)). Pumilio repeat units lie at residues 160 to 195 (HDST…LSKS), 196 to 231 (KYAR…MLRH), 232 to 260 (SEAS…ELYG), 272 to 308 (PTLE…VIKH), 309 to 344 (SLVH…MAHT), 345 to 380 (HDGA…FAMG), 381 to 418 (EYAH…IISN), 419 to 487 (KHGK…MVMD), 488 to 534 (KSCC…MAEH), 535 to 579 (PAGH…WASV), and 580 to 618 (NRGA…LQNS).

In adult, expressed at high levels in eye and ovary and at lower levels in brain, testis and head kidney. In the adult ovary, prominently expressed in early immature follicles.

It is found in the nucleus. Its subcellular location is the nucleolus. The protein resides in the nucleoplasm. It localises to the chromosome. In terms of biological role, inhibits the poly(ADP-ribosyl)ation activity of PARP1 and the degradation of PARP1 by CASP3 following genotoxic stress. Binds to double-stranded RNA or DNA without sequence specificity. Involved in development of the eye and of primordial germ cells. The polypeptide is Pumilio homolog 3 (pum3) (Danio rerio (Zebrafish)).